The primary structure comprises 417 residues: DNA primase DnaG (417 aa).

In terms of domain architecture, Toprim spans 171-257 (DAIIIVEGRA…SVEDMARKEI (87 aa)). Residues Glu-177, Asp-219, and Asp-221 each coordinate Mg(2+). Residues 278–325 (VPGEKRTQDLRPQKPGASEQNSIKKENVENENESTPTSFEPISEPAPP) are disordered. The span at 279 to 289 (PGEKRTQDLRP) shows a compositional bias: basic and acidic residues.

It belongs to the archaeal DnaG primase family. Forms a ternary complex with MCM helicase and DNA. The cofactor is Mg(2+).

The enzyme catalyses ssDNA + n NTP = ssDNA/pppN(pN)n-1 hybrid + (n-1) diphosphate.. Its function is as follows. RNA polymerase that catalyzes the synthesis of short RNA molecules used as primers for DNA polymerase during DNA replication. This chain is DNA primase DnaG, found in Methanosphaerula palustris (strain ATCC BAA-1556 / DSM 19958 / E1-9c).